A 601-amino-acid polypeptide reads, in one-letter code: Leucine zipper putative tumor suppressor 1 (601 aa).

G2 carries N-myristoyl glycine lipidation. The interval G135–S190 is disordered. Basic and acidic residues predominate over residues P153–L162. Polar residues predominate over residues S174 to S190. Positions P255–A573 form a coiled coil.

It belongs to the LZTS family. As to quaternary structure, binds EEF1G, TLK2 and CDK1. Phosphorylated on serine residues. Hyperphosphorylated by the cAMP-dependent kinase PKA during cell-cycle progression. Highly expressed in brain, in particular in cortex, the CA2 region of the hippocampus, olfactory bulb, striatum and pons. Not detectable in the other tissues tested.

The protein localises to the cytoplasm. It is found in the cell membrane. The protein resides in the cell projection. It localises to the dendritic spine. Its subcellular location is the postsynaptic density. The protein localises to the synapse. Involved in the regulation of cell growth. May stabilize the active CDC2-cyclin B1 complex and thereby contribute to the regulation of the cell cycle and the prevention of uncontrolled cell proliferation. May act as tumor suppressor. This Rattus norvegicus (Rat) protein is Leucine zipper putative tumor suppressor 1 (Lzts1).